The chain runs to 330 residues: Phosphatidylglycerol--prolipoprotein diacylglyceryl transferase (330 aa).

3 helical membrane-spanning segments follow: residues 22–42 (LPIR…LVVG), 57–77 (YDIA…YHLA), and 97–117 (IWDG…GAWL). Position 145 (arginine 145) interacts with a 1,2-diacyl-sn-glycero-3-phospho-(1'-sn-glycerol). The next 2 membrane-spanning stretches (helical) occupy residues 193-213 (VVQP…FALI) and 257-277 (INSF…ILAP).

This sequence belongs to the Lgt family.

The protein resides in the cell membrane. The enzyme catalyses L-cysteinyl-[prolipoprotein] + a 1,2-diacyl-sn-glycero-3-phospho-(1'-sn-glycerol) = an S-1,2-diacyl-sn-glyceryl-L-cysteinyl-[prolipoprotein] + sn-glycerol 1-phosphate + H(+). It functions in the pathway protein modification; lipoprotein biosynthesis (diacylglyceryl transfer). Catalyzes the transfer of the diacylglyceryl group from phosphatidylglycerol to the sulfhydryl group of the N-terminal cysteine of a prolipoprotein, the first step in the formation of mature lipoproteins. The protein is Phosphatidylglycerol--prolipoprotein diacylglyceryl transferase of Mycobacterium leprae (strain Br4923).